The chain runs to 475 residues: Putative histidine permease (475 aa).

12 helical membrane passes run 20-40 (LFMI…TGYT), 44-64 (AGPG…YLVM), 87-107 (FIGP…WVVT), 127-147 (SVWM…AFSV), 162-182 (IVTI…LISL), 199-219 (GLFP…SFAF), 246-266 (VAWR…GLIS), 277-297 (FVAV…NFVI), 341-361 (ALMI…VAPG), 363-383 (VYVV…MSIA), 410-430 (YPLM…GLAF), and 434-454 (QRIA…IYHF).

Belongs to the amino acid-polyamine-organocation (APC) superfamily.

It is found in the cell membrane. In Bacillus subtilis (strain 168), this protein is Putative histidine permease (hutM).